Consider the following 26-residue polypeptide: Glycyl-poneratoxin (26 aa).

Arginine 25 carries the arginine amide; in delta-paraponeritoxin-Pc1a modification.

The glycine-PoTx is a non-amidated form of poneratoxin, with an extra-Gly at C-terminus. This loss of amidation does not alter toxin activity on Nav1.7/SCN9A. Expressed by the venom gland.

The protein localises to the secreted. Its function is as follows. Toxin that causes pain in vertebrates by targeting tetrodotoxin (TTX)-sensitive sodium channels in peripheral sensory neurons. Also blocks synaptic transmission and stimulates smooth muscle contraction. Converts the normally rapidly activating and inactivating sodium channel current into one that does not inactivate. Is active on both Nav1.6/SCN8A and Nav1.7/SCN9A sodium channels, with a much potent activity on Nav1.6/SCN8A (EC(50)=97 nM on human channels) than on Nav1.7/SCN9A (EC(50)=2.3 uM on human and EC(50)=1.8 uM on mouse channels). On these channels, causes a sustained current, a reduction in peak current amplitude and a hyperpolarising shift. Modulates Nav1.7/SCN9A in a non-competitive manner with TTX or tetracaine. Toxin-induced persistant current is very slowly reversible with repeated wash steps over 30 minutes. In vivo, shallow intraplantar injection in mice causes immediate, long-lasting and near-maximal nocifensive behaviors, which decrease with coinjection of TTX. When tested on insects, causes paralysis but not mortality at high doses. The sequence is that of Glycyl-poneratoxin from Paraponera clavata (Bullet ant).